Reading from the N-terminus, the 420-residue chain is MLKAVILIGGPQKGTRFRPLSFEVPKPLFPVAGVPMIQHHIEACAQVPGMQEILLIGFYQPDEPLTQFLEAAQQEFNLPVRYLQEFAPLGTGGGLYHFRDQILAGSPEAFFVLNADVCSDFPLSAMLEAHRRQRHPFLLLGTTANRTQSLNYGCIVENPQTHEVLHYVEKPSTFISDIINCGIYLFSPEALKPLRDVFQRNQQDGQLEDSPGLWPGAGTIRLEQDVFSALAGQGQIYVHLTDGIWSQIKSAGSALYASRLYLSRYQDTHPERLAKHTPGGPWIRGNVYIHPTAKVAPSAVLGPNVSIGKGVTVGEGVRLRESIVLHGATLQEHTCVLHSIVGWGSTVGRWARVEGTPSDPNPNDPRARMDSESLFKDGKLLPAITILGCRVRIPAEVLILNSIVLPHKELSRSFTNQIIL.

Positions 2 to 251 are substrate-binding domain; sequence LKAVILIGGP…DGIWSQIKSA (250 aa). Positions 85 and 247 each coordinate GDP-alpha-D-mannose. A hexapeptide repeat domain region spans residues 273–420; it reads LAKHTPGGPW…SRSFTNQIIL (148 aa). The C-loop stretch occupies residues 356–384; it reads TPSDPNPNDPRARMDSESLFKDGKLLPAI.

Belongs to the transferase hexapeptide repeat family. Component of the GMPPA-GMPPB mannose-1-phosphate guanylyltransferase complex composed of 4 GMPPA subunits and 8 GMPPB subunits; the complex is organized into three layers, a central layer made up of 2 GMPPA dimers sandwiched between two layers each made up of 2 GMPPB dimers. As to expression, expressed in fibroblasts (at protein level).

Its subcellular location is the cytoplasm. In terms of biological role, regulatory subunit of the GMPPA-GMPPB mannose-1-phosphate guanylyltransferase complex; reduces the catalytic activity of GMPPB when part of the complex. Mediates allosteric feedback inhibition of GMPPB catalytic activity upon binding GDP-alpha-D-mannose. Together with GMPPB regulates GDP-alpha-D-mannose levels. The chain is Mannose-1-phosphate guanylyltransferase regulatory subunit alpha from Homo sapiens (Human).